A 105-amino-acid chain; its full sequence is MSQGFKTEADVMRNTAHRVDDTNQEVSAELSRLRSIVDGVRASWEGTAQVSFDNLMQRWDASAKGLQDALQSISDNIRGNATSFENVEADNQSAFSAVGGQGLAL.

The interval 1 to 23 is disordered; it reads MSQGFKTEADVMRNTAHRVDDTN. Residues 7–21 show a composition bias toward basic and acidic residues; the sequence is TEADVMRNTAHRVDD.

It belongs to the WXG100 family. CFP-10 subfamily. In terms of assembly, forms a tight 1:1 complex with EsxB.

The chain is ESAT-6-like protein EsxB from Corynebacterium diphtheriae (strain ATCC 700971 / NCTC 13129 / Biotype gravis).